We begin with the raw amino-acid sequence, 920 residues long: Nonribosomal peptide synthetase atrA (920 aa).

The interval 13–428 (AAAQERCGRV…AGRLKETMII (416 aa)) is adenylation (A) domain. Positions 558-637 (PPKDELERSL…ELSAALHDLQ (80 aa)) constitute a Carrier domain. S595 carries the post-translational modification O-(pantetheine 4'-phosphoryl)serine. The thioesterase (TE) domain stretch occupies residues 656-905 (PLWLIHPGVG…YTMLAPEHVF (250 aa)).

It belongs to the NRP synthetase family.

It carries out the reaction 2 3-(4-hydroxyphenyl)pyruvate + 2 ATP = atromentin + 2 AMP + 2 diphosphate + H(+). Its function is as follows. Nonribosomal peptide synthetase that mediates the biosynthesis of atromentin. AtrA first activates 4-hydroxyphenylpyruvate (HPPA) through its A domain to AMP-HPPA. The HPPA unit is then loaded to the T domain and eventually transferred to the TE domain. Another HPPA unit is then loaded onto the T domain. The TE domain then catalyzes the condensation of the two HPPA units and the release of atromentin via cyclization. The sequence is that of Nonribosomal peptide synthetase atrA from Aspergillus terreus (strain NIH 2624 / FGSC A1156).